The sequence spans 81 residues: Protein Vpu (81 aa).

Topologically, residues 1–7 are extracellular; the sequence is MQPLVIA. A helical membrane pass occupies residues 8 to 28; the sequence is AIVALVVAGIIAIVVWSIVFI. The Cytoplasmic portion of the chain corresponds to 29–81; it reads EYRKIRRQRKIDKLIDRISERAEDSGNESEGDQEELSALVGMGHDAPWVINDL. A phosphoserine; by host CK2 mark is found at S53 and S57.

This sequence belongs to the HIV-1 VPU protein family. Homopentamer. Interacts with host CD4 and BRTC; these interactions induce proteasomal degradation of CD4. Interacts with host BST2; this interaction leads to the degradation of host BST2. Interacts with host FBXW11. Interacts with host AP1M1; this interaction plays a role in the mistrafficking and subsequent degradation of host BST2. Interacts with host RANBP2; this interaction allows Vpu to down-regulate host BLM sumoylation. In terms of processing, phosphorylated by host CK2. This phosphorylation is necessary for interaction with human BTRC and degradation of CD4.

The protein localises to the host membrane. Its activity is regulated as follows. Ion channel activity is inhibited by hexamethylene amiloride in vitro. Enhances virion budding by targeting host CD4 and Tetherin/BST2 to proteasome degradation. Degradation of CD4 prevents any unwanted premature interactions between viral Env and its host receptor CD4 in the endoplasmic reticulum. Degradation of antiretroviral protein Tetherin/BST2 is important for virion budding, as BST2 tethers new viral particles to the host cell membrane. Mechanistically, Vpu bridges either CD4 or BST2 to BTRC, a substrate recognition subunit of the Skp1/Cullin/F-box protein E3 ubiquitin ligase, induces their ubiquitination and subsequent proteasomal degradation. The alteration of the E3 ligase specificity by Vpu seems to promote the degradation of host IKBKB, leading to NF-kappa-B down-regulation and subsequent apoptosis. Acts as a viroporin that forms an oligomeric ion channel in membranes. Modulates the host DNA repair mechanisms to promote degradation of nuclear viral cDNA in cells that are already productively infected in order to suppress immune sensing and proviral hyper-integration (superinfection). Manipulates PML-NBs and modulates SUMOylation of host BLM protein thereby enhancing its DNA-end processing activity toward viral unintegrated linear DNA. Also inhibits RAD52-mediated homologous repair of viral cDNA, preventing the generation of dead-end circular forms of single copies of the long terminal repeat and permitting sustained nucleolytic attack. The chain is Protein Vpu from Homo sapiens (Human).